We begin with the raw amino-acid sequence, 352 residues long: MKVLGLETSCDETGLAIFDSEQVTSDNKGLLGQVLYSQIELHALYGGVVPELASRDHIRKLVPLFNELLQQCNITKDEIDAVAYTKGPGLIGALMTGALFGRSLAYGLDIPAIGVHHMEGHLLAPLMGANPPAFPFVSLLVSGGHTLLIAAHGIGQYEILGESIDDAAGECFDKAAKMLGLPYPGGPNIAKLAESGNSDAYSLPRPMLHRGLDFSFSGMKTAVHNLIKDTPCSGGSGNGSDSDPQVRADIAASFQHAVVDTLVKKCVKALKQVNMSRLVIAGGVSANSHLRKTLERELAKINATVHYAPPALCTDNGAMIAYAGYERLQAGQADDLAVSCVPRWPMTELPAV.

Positions 117 and 121 each coordinate Fe cation. Residues 140–144 (LVSGG), aspartate 173, glycine 186, and asparagine 287 each bind substrate. Residue aspartate 315 participates in Fe cation binding.

It belongs to the KAE1 / TsaD family. Fe(2+) is required as a cofactor.

The protein resides in the cytoplasm. The catalysed reaction is L-threonylcarbamoyladenylate + adenosine(37) in tRNA = N(6)-L-threonylcarbamoyladenosine(37) in tRNA + AMP + H(+). In terms of biological role, required for the formation of a threonylcarbamoyl group on adenosine at position 37 (t(6)A37) in tRNAs that read codons beginning with adenine. Is involved in the transfer of the threonylcarbamoyl moiety of threonylcarbamoyl-AMP (TC-AMP) to the N6 group of A37, together with TsaE and TsaB. TsaD likely plays a direct catalytic role in this reaction. This chain is tRNA N6-adenosine threonylcarbamoyltransferase, found in Psychrobacter cryohalolentis (strain ATCC BAA-1226 / DSM 17306 / VKM B-2378 / K5).